A 287-amino-acid chain; its full sequence is Isopentenyl-diphosphate Delta-isomerase I (287 aa).

The Nudix hydrolase domain occupies 105 to 257; sequence LLHRAFSVFL…GVKLSPWFRL (153 aa). Catalysis depends on residues cysteine 142 and tyrosine 207.

It belongs to the IPP isomerase type 1 family.

It catalyses the reaction isopentenyl diphosphate = dimethylallyl diphosphate. It functions in the pathway isoprenoid biosynthesis; dimethylallyl diphosphate biosynthesis; dimethylallyl diphosphate from isopentenyl diphosphate: step 1/1. Its pathway is porphyrin-containing compound metabolism; chlorophyll biosynthesis. Functionally, catalyzes the 1,3-allylic rearrangement of the homoallylic substrate isopentenyl (IPP) to its highly electrophilic allylic isomer, dimethylallyl diphosphate (DMAPP). This Clarkia breweri (Fairy fans) protein is Isopentenyl-diphosphate Delta-isomerase I (IPI1).